A 33-amino-acid polypeptide reads, in one-letter code: MNLEVIAQLTVLALIVASGPLVIALLAARKGNL.

Residues 5–25 (VIAQLTVLALIVASGPLVIAL) form a helical membrane-spanning segment.

Belongs to the Psb30/Ycf12 family. In terms of assembly, PSII is composed of 1 copy each of membrane proteins PsbA, PsbB, PsbC, PsbD, PsbE, PsbF, PsbH, PsbI, PsbJ, PsbK, PsbL, PsbM, PsbT, PsbX, PsbY, PsbZ, Psb30/Ycf12, peripheral proteins of the oxygen-evolving complex and a large number of cofactors. It forms dimeric complexes.

It is found in the plastid. Its subcellular location is the chloroplast thylakoid membrane. Functionally, a core subunit of photosystem II (PSII), probably helps stabilize the reaction center. This Marchantia polymorpha (Common liverwort) protein is Photosystem II reaction center protein Psb30.